We begin with the raw amino-acid sequence, 267 residues long: Thiamine thiazole synthase (267 aa).

Residues S47, 66–67 (ER), G74, V138, and 164–166 (HID) each bind NAD(+). 2 residues coordinate Fe cation: D166 and H181. NAD(+)-binding residues include S184 and M230. R240 is a glycine binding site.

Belongs to the THI4 family. As to quaternary structure, homooctamer; tetramer of dimers. The cofactor is Fe(2+).

It catalyses the reaction hydrogen sulfide + glycine + NAD(+) = ADP-5-ethyl-4-methylthiazole-2-carboxylate + nicotinamide + 3 H2O + H(+). It participates in cofactor biosynthesis; thiamine diphosphate biosynthesis. Functionally, involved in the biosynthesis of the thiazole moiety of thiamine. Catalyzes the conversion of NAD and glycine to adenosine diphosphate 5-(2-hydroxyethyl)-4-methylthiazole-2-carboxylate (ADT), an adenylated thiazole intermediate, using free sulfide as a source of sulfur. The polypeptide is Thiamine thiazole synthase (Methanocaldococcus jannaschii (strain ATCC 43067 / DSM 2661 / JAL-1 / JCM 10045 / NBRC 100440) (Methanococcus jannaschii)).